Consider the following 346-residue polypeptide: Holliday junction branch migration complex subunit RuvB (346 aa).

Positions 1 to 183 (MTEQRIIASS…FGIVQRLEFY (183 aa)) are large ATPase domain (RuvB-L). Residues Ile-22, Arg-23, Gly-64, Lys-67, Thr-68, Thr-69, 130–132 (EDF), Arg-173, Tyr-183, and Arg-220 contribute to the ATP site. Position 68 (Thr-68) interacts with Mg(2+). The interval 184 to 254 (SPQELTRIVI…VAQAAMQMLK (71 aa)) is small ATPAse domain (RuvB-S). Positions 257–346 (PEGFDELDRR…PGIGEPGDLF (90 aa)) are head domain (RuvB-H). Residues Arg-293, Arg-312, and Arg-317 each contribute to the DNA site.

Belongs to the RuvB family. Homohexamer. Forms an RuvA(8)-RuvB(12)-Holliday junction (HJ) complex. HJ DNA is sandwiched between 2 RuvA tetramers; dsDNA enters through RuvA and exits via RuvB. An RuvB hexamer assembles on each DNA strand where it exits the tetramer. Each RuvB hexamer is contacted by two RuvA subunits (via domain III) on 2 adjacent RuvB subunits; this complex drives branch migration. In the full resolvosome a probable DNA-RuvA(4)-RuvB(12)-RuvC(2) complex forms which resolves the HJ.

Its subcellular location is the cytoplasm. The enzyme catalyses ATP + H2O = ADP + phosphate + H(+). The RuvA-RuvB-RuvC complex processes Holliday junction (HJ) DNA during genetic recombination and DNA repair, while the RuvA-RuvB complex plays an important role in the rescue of blocked DNA replication forks via replication fork reversal (RFR). RuvA specifically binds to HJ cruciform DNA, conferring on it an open structure. The RuvB hexamer acts as an ATP-dependent pump, pulling dsDNA into and through the RuvAB complex. RuvB forms 2 homohexamers on either side of HJ DNA bound by 1 or 2 RuvA tetramers; 4 subunits per hexamer contact DNA at a time. Coordinated motions by a converter formed by DNA-disengaged RuvB subunits stimulates ATP hydrolysis and nucleotide exchange. Immobilization of the converter enables RuvB to convert the ATP-contained energy into a lever motion, pulling 2 nucleotides of DNA out of the RuvA tetramer per ATP hydrolyzed, thus driving DNA branch migration. The RuvB motors rotate together with the DNA substrate, which together with the progressing nucleotide cycle form the mechanistic basis for DNA recombination by continuous HJ branch migration. Branch migration allows RuvC to scan DNA until it finds its consensus sequence, where it cleaves and resolves cruciform DNA. The chain is Holliday junction branch migration complex subunit RuvB from Xanthomonas axonopodis pv. citri (strain 306).